A 36-amino-acid chain; its full sequence is Pancreatic polypeptide (36 aa).

Tyr-36 is modified (tyrosine amide).

This sequence belongs to the NPY family.

It is found in the secreted. Its function is as follows. Hormone secreted by pancreatic cells that acts as a regulator of pancreatic and gastrointestinal functions probably by signaling through the G protein-coupled receptor NPY4R2. This Erinaceus europaeus (Western European hedgehog) protein is Pancreatic polypeptide (PPY).